An 878-amino-acid chain; its full sequence is Phosphoenolpyruvate carboxylase (878 aa).

Residues H138 and K545 contribute to the active site.

The protein belongs to the PEPCase type 1 family. It depends on Mg(2+) as a cofactor.

The enzyme catalyses oxaloacetate + phosphate = phosphoenolpyruvate + hydrogencarbonate. In terms of biological role, forms oxaloacetate, a four-carbon dicarboxylic acid source for the tricarboxylic acid cycle. The polypeptide is Phosphoenolpyruvate carboxylase (Shewanella loihica (strain ATCC BAA-1088 / PV-4)).